A 30-amino-acid chain; its full sequence is Bacteriocin SRCAM 37 (30 aa).

The protein belongs to the bacteriocin class IIA/YGNGV family.

The protein localises to the secreted. Bacteriocin with antibacterial activity against C.jejuni. The sequence is that of Bacteriocin SRCAM 37 from Paenibacillus polymyxa (Bacillus polymyxa).